Consider the following 431-residue polypeptide: Serine hydroxymethyltransferase (431 aa).

(6S)-5,6,7,8-tetrahydrofolate is bound by residues Leu-128 and 132–134 (GHL). An N6-(pyridoxal phosphate)lysine modification is found at Lys-237.

It belongs to the SHMT family. In terms of assembly, homodimer. Requires pyridoxal 5'-phosphate as cofactor.

The protein resides in the cytoplasm. The enzyme catalyses (6R)-5,10-methylene-5,6,7,8-tetrahydrofolate + glycine + H2O = (6S)-5,6,7,8-tetrahydrofolate + L-serine. The protein operates within one-carbon metabolism; tetrahydrofolate interconversion. It participates in amino-acid biosynthesis; glycine biosynthesis; glycine from L-serine: step 1/1. In terms of biological role, catalyzes the reversible interconversion of serine and glycine with tetrahydrofolate (THF) serving as the one-carbon carrier. This reaction serves as the major source of one-carbon groups required for the biosynthesis of purines, thymidylate, methionine, and other important biomolecules. Also exhibits THF-independent aldolase activity toward beta-hydroxyamino acids, producing glycine and aldehydes, via a retro-aldol mechanism. This chain is Serine hydroxymethyltransferase, found in Ruegeria sp. (strain TM1040) (Silicibacter sp.).